The following is a 386-amino-acid chain: GLABROUS1 enhancer-binding protein-like 1 (386 aa).

Disordered stretches follow at residues 1-58 and 197-314; these read MVTP…KKKK and ESGE…DDDD. Basic and acidic residues predominate over residues 216–226; it reads EEIRDNDETAR. Positions 221-285 form a coiled coil; that stretch reads NDETARKAQQ…LKEHEEVANT (65 aa). The span at 257-267 shows a compositional bias: polar residues; the sequence is DNNGTTQIAQQ. The segment covering 291–300 has biased composition (low complexity); sequence NGAAKTTENG. Residues 354-375 are non-canonical leucine-zipper; sequence LSDEWKALCVEERRLNIKKLRF.

The protein belongs to the GeBP family. Homo- and heterodimers. Interacts with GEBP, GPL2 and GPL3. Interacts with GEBP. In terms of tissue distribution, expressed in the apical meristem and young leaf primordia. Detected in the vascular tissues of cotyledons and leaves, in hydathodes and at the base of flowers and siliques, but not in roots.

It localises to the nucleus. Functionally, probable transcription factor. May play redundant roles with GEBP and GPL2 in cytokinin responses by regulating the transcript levels of type-A ARR response genes. Involved in stress responses. Plays a repressive role in cell expansion by counteracting the positive role of CPR5 in this process, but does not regulate cell proliferation or endoreduplication. The sequence is that of GLABROUS1 enhancer-binding protein-like 1 from Arabidopsis thaliana (Mouse-ear cress).